Here is a 494-residue protein sequence, read N- to C-terminus: UDP-N-acetylmuramoyl-L-alanyl-D-glutamate--L-lysine ligase (494 aa).

Residue Ser-30 participates in UDP-N-acetyl-alpha-D-muramoyl-L-alanyl-D-glutamate binding. Residue 110–116 (GTNGKTS) participates in ATP binding. Residues 152–153 (TT), Ser-179, and Arg-187 contribute to the UDP-N-acetyl-alpha-D-muramoyl-L-alanyl-D-glutamate site. Lys-219 carries the post-translational modification N6-carboxylysine. Residues 406 to 409 (DNPA) carry the L-lysine recognition motif motif.

This sequence belongs to the MurCDEF family. MurE subfamily. Post-translationally, carboxylation is probably crucial for Mg(2+) binding and, consequently, for the gamma-phosphate positioning of ATP.

It localises to the cytoplasm. The enzyme catalyses UDP-N-acetyl-alpha-D-muramoyl-L-alanyl-D-glutamate + L-lysine + ATP = UDP-N-acetyl-alpha-D-muramoyl-L-alanyl-gamma-D-glutamyl-L-lysine + ADP + phosphate + H(+). Its pathway is cell wall biogenesis; peptidoglycan biosynthesis. Its function is as follows. Catalyzes the addition of L-lysine to the nucleotide precursor UDP-N-acetylmuramoyl-L-alanyl-D-glutamate (UMAG) in the biosynthesis of bacterial cell-wall peptidoglycan. In Staphylococcus aureus (strain MW2), this protein is UDP-N-acetylmuramoyl-L-alanyl-D-glutamate--L-lysine ligase.